The chain runs to 651 residues: Acetyl-coenzyme A synthetase (651 aa).

CoA contacts are provided by residues 191–194 (RGGK), T311, and N335. Residues 387–389 (GEP), 411–416 (DTWWQT), D500, and R515 contribute to the ATP site. S523 is a binding site for CoA. Position 526 (R526) interacts with ATP. Mg(2+) contacts are provided by V537, H539, and V542. R584 contacts CoA. An N6-acetyllysine modification is found at K609.

It belongs to the ATP-dependent AMP-binding enzyme family. The cofactor is Mg(2+). Acetylated. Deacetylation by the SIR2-homolog deacetylase activates the enzyme.

The catalysed reaction is acetate + ATP + CoA = acetyl-CoA + AMP + diphosphate. Its function is as follows. Catalyzes the conversion of acetate into acetyl-CoA (AcCoA), an essential intermediate at the junction of anabolic and catabolic pathways. AcsA undergoes a two-step reaction. In the first half reaction, AcsA combines acetate with ATP to form acetyl-adenylate (AcAMP) intermediate. In the second half reaction, it can then transfer the acetyl group from AcAMP to the sulfhydryl group of CoA, forming the product AcCoA. The chain is Acetyl-coenzyme A synthetase from Stutzerimonas stutzeri (strain A1501) (Pseudomonas stutzeri).